We begin with the raw amino-acid sequence, 129 residues long: Small ribosomal subunit protein uS11 (129 aa).

It belongs to the universal ribosomal protein uS11 family. Part of the 30S ribosomal subunit. Interacts with proteins S7 and S18. Binds to IF-3.

In terms of biological role, located on the platform of the 30S subunit, it bridges several disparate RNA helices of the 16S rRNA. Forms part of the Shine-Dalgarno cleft in the 70S ribosome. This chain is Small ribosomal subunit protein uS11, found in Histophilus somni (strain 129Pt) (Haemophilus somnus).